A 251-amino-acid polypeptide reads, in one-letter code: HTH-type transcriptional regulator UlaR (251 aa).

Residues E3–A58 form the HTH deoR-type domain. A DNA-binding region (H-T-H motif) is located at residues V20 to D39.

The protein resides in the cytoplasm. In terms of biological role, represses ulaG and the ulaABCDEF operon. This is HTH-type transcriptional regulator UlaR from Shigella sonnei (strain Ss046).